The sequence spans 393 residues: Beta-ureidopropionase (393 aa).

Positions 72 to 344 constitute a CN hydrolase domain; sequence VRVGLVQNRI…DGLLVTELNL (273 aa). Residue Glu119 is the Proton acceptor of the active site. Lys196 (proton donor) is an active-site residue. The active-site Nucleophile is Cys233. A Phosphoserine modification is found at Ser378.

The protein belongs to the carbon-nitrogen hydrolase superfamily. BUP family. Homodimer, homotetramer, homooctamer; can also form higher homooligomers. The N-terminus is blocked. In terms of tissue distribution, detected in liver (at protein level).

Its subcellular location is the cytoplasm. The catalysed reaction is 3-(carbamoylamino)propanoate + H2O + 2 H(+) = beta-alanine + NH4(+) + CO2. The enzyme catalyses 3-(carbamoylamino)-2-methylpropanoate + H2O + 2 H(+) = (R)-3-amino-2-methylpropanoate + NH4(+) + CO2. The protein operates within amino-acid biosynthesis; beta-alanine biosynthesis. Its activity is regulated as follows. Allosteric enzyme with positive cooperativity toward the substrate N-carbamoyl-beta-alanine at low substrate concentrations (below 12 nM). Displays no cooperativity at substrate levels above 12 nM. Its function is as follows. Catalyzes a late step in pyrimidine degradation. Converts N-carbamoyl-beta-alanine (3-ureidopropanoate) into beta-alanine, ammonia and carbon dioxide. Likewise, converts N-carbamoyl-beta-aminoisobutyrate (3-ureidoisobutyrate) into beta-aminoisobutyrate, ammonia and carbon dioxide. This is Beta-ureidopropionase (Upb1) from Rattus norvegicus (Rat).